Consider the following 485-residue polypeptide: ETS translocation variant 4 (485 aa).

Residue Lys6 forms a Glycyl lysine isopeptide (Lys-Gly) (interchain with G-Cter in SUMO2) linkage. Disordered stretches follow at residues 79–114 (PDFH…RKPP) and 135–214 (IAIK…QHQL). Residue Lys95 forms a Glycyl lysine isopeptide (Lys-Gly) (interchain with G-Cter in SUMO) linkage. The residue at position 100 (Ser100) is a Phosphoserine. A Glycyl lysine isopeptide (Lys-Gly) (interchain with G-Cter in SUMO2) cross-link involves residue Lys138. Ser139 and Ser148 each carry phosphoserine. Low complexity predominate over residues 158–171 (QQQSLLRASSSSQS). The residue at position 215 (Ser215) is a Phosphoserine. Residues Lys227 and Lys261 each participate in a glycyl lysine isopeptide (Lys-Gly) (interchain with G-Cter in SUMO) cross-link. Lys323 is covalently cross-linked (Glycyl lysine isopeptide (Lys-Gly) (interchain with G-Cter in SUMO2)). The ETS DNA-binding region spans 342 to 422 (LQLWQFLVAL…AGERYVYKFV (81 aa)).

Belongs to the ETS family. In terms of processing, sumoylated; enhanced upon ERK/MAP kinase pathway activation it positively regulates the transcriptional activator capacity. Sumoylation at Lys-95 probably requires phosphorylation at Ser-100. Transiently polysumoylated and desumoylated by SENP1. Sumoylation is a prerequisite to polyubiquitination which in turn increases proteasomal-mediated degradation. Probably polyubiquitinated by RNF4 and deubiquitinated by USP2. As to expression, epididymis and brain.

Its subcellular location is the nucleus. In terms of biological role, transcriptional activator. May play a role in keratinocyte differentiation. The protein is ETS translocation variant 4 (Etv4) of Mus musculus (Mouse).